Here is a 505-residue protein sequence, read N- to C-terminus: Probable folylpolyglutamate synthase (505 aa).

An ATP-binding site is contributed by G89–S92. Mg(2+)-binding residues include S121, E190, and H218. Positions 332 and 346 each coordinate ATP.

It belongs to the folylpolyglutamate synthase family. A monovalent cation serves as cofactor.

The protein resides in the mitochondrion inner membrane. The protein localises to the mitochondrion matrix. It localises to the cytoplasm. The catalysed reaction is (6S)-5,6,7,8-tetrahydrofolyl-(gamma-L-Glu)(n) + L-glutamate + ATP = (6S)-5,6,7,8-tetrahydrofolyl-(gamma-L-Glu)(n+1) + ADP + phosphate + H(+). The protein operates within cofactor biosynthesis; tetrahydrofolylpolyglutamate biosynthesis. In terms of biological role, catalyzes conversion of folates to polyglutamate derivatives allowing concentration of folate compounds in the cell and the intracellular retention of these cofactors, which are important substrates for most of the folate-dependent enzymes that are involved in one-carbon transfer reactions involved in purine, pyrimidine and amino acid synthesis. In Schizosaccharomyces pombe (strain 972 / ATCC 24843) (Fission yeast), this protein is Probable folylpolyglutamate synthase (met7).